The sequence spans 399 residues: S-adenosylmethionine synthase (399 aa).

His17 contributes to the ATP binding site. Mg(2+) is bound at residue Asp19. Glu45 contributes to the K(+) binding site. Residues Glu58 and Gln101 each contribute to the L-methionine site. The segment at 101 to 111 (QSADIAMGVDQ) is flexible loop. ATP is bound by residues 177–179 (DGK), 244–245 (RF), Asp253, 259–260 (RK), Ala276, and Lys280. Asp253 contacts L-methionine. Lys284 is an L-methionine binding site.

The protein belongs to the AdoMet synthase family. In terms of assembly, homotetramer; dimer of dimers. It depends on Mg(2+) as a cofactor. K(+) is required as a cofactor.

It localises to the cytoplasm. The enzyme catalyses L-methionine + ATP + H2O = S-adenosyl-L-methionine + phosphate + diphosphate. It functions in the pathway amino-acid biosynthesis; S-adenosyl-L-methionine biosynthesis; S-adenosyl-L-methionine from L-methionine: step 1/1. Functionally, catalyzes the formation of S-adenosylmethionine (AdoMet) from methionine and ATP. The overall synthetic reaction is composed of two sequential steps, AdoMet formation and the subsequent tripolyphosphate hydrolysis which occurs prior to release of AdoMet from the enzyme. This chain is S-adenosylmethionine synthase, found in Bacillus thuringiensis subsp. konkukian (strain 97-27).